The primary structure comprises 459 residues: Cysteine--tRNA ligase (459 aa).

Cysteine 29 provides a ligand contact to Zn(2+). A 'HIGH' region motif is present at residues 31–41; it reads MTVYDLCHLGH. Zn(2+) contacts are provided by cysteine 213, histidine 238, and glutamate 242. Positions 270 to 274 match the 'KMSKS' region motif; that stretch reads KMSKS. Lysine 273 lines the ATP pocket.

It belongs to the class-I aminoacyl-tRNA synthetase family. In terms of assembly, monomer. It depends on Zn(2+) as a cofactor.

The protein resides in the cytoplasm. It carries out the reaction tRNA(Cys) + L-cysteine + ATP = L-cysteinyl-tRNA(Cys) + AMP + diphosphate. This Albidiferax ferrireducens (strain ATCC BAA-621 / DSM 15236 / T118) (Rhodoferax ferrireducens) protein is Cysteine--tRNA ligase.